Consider the following 588-residue polypeptide: Disabled homolog 1 (588 aa).

Residues 1-26 (MSTETELQVAVKTSAKKDSRKKGQDR) form a disordered region. Over residues 15 to 26 (AKKDSRKKGQDR) the composition is skewed to basic and acidic residues. The 154-residue stretch at 36 to 189 (KGEGVRYKAK…CEQAVYQTIL (154 aa)) folds into the PID domain. Phosphotyrosine occurs at positions 198, 220, and 232. 4 disordered regions span residues 224 to 243 (TSQK…NSQP), 420 to 444 (LATV…QKMG), 451 to 470 (FQMV…PSLT), and 502 to 588 (LTPV…QDGS). Residues 424–436 (PGTNDSARSSPQS) show a composition bias toward polar residues. Composition is skewed to low complexity over residues 503 to 512 (TPVTSTTPST) and 523 to 534 (SSPSKSSASHVS). At S524 the chain carries Phosphoserine; by CDK5. Acidic residues predominate over residues 537 to 546 (TADDIFEEGF).

As to quaternary structure, associates with the SH2 domains of SRC, FYN and ABL. Interacts (phosphorylated on tyrosine residues) with CRK and CRKL (via respective SH2 domain). Interacts with SIAH1, LRP8 and VLDLR. Interacts with LRP1. Interacts with APLP1 (via NPXY motif). Interacts with DAB2IP. Interacts with ZSWIM8. Post-translationally, phosphorylated by FYN on Tyr-198 and Tyr-220 upon reelin induction in embryonic neurons. Also found phosphorylated on Tyr-232 upon reelin induction. Also phosphorylated on Ser-524 independently of reelin signaling. Ubiquitinated by various cullin-5-RING E3 ubiquitin-protein ligase complexes (ECS complexes) following ligand-binding and phosphorylation, leading to its degradation. Ubiquitinated by the ECS(SOCS7) complex in the cortical plate of the developing cerebral cortex following ligand-binding and phosphorylation by FYN, leading to its degradation by the proteasome. Recognized by ZSWIM8 through a disorder targets misorder mechanism that eliminates misfolded DAB1 via ubiquitination and proteasomal degradation. In terms of tissue distribution, expressed mainly in brain. Specifically expressin in cortical neurons.

It is found in the cytoplasm. Its function is as follows. Signaling adapter of the reelin-mediated signaling pathway, which regulates the migration and differentiation of postmitotic neurons during brain development. Mediates intracellular transduction of Reelin signaling following reelin (RELN)-binding to its receptor: acts by docking proteins through its phosphotyrosine residues and PID domain. The sequence is that of Disabled homolog 1 from Mus musculus (Mouse).